The primary structure comprises 129 residues: UPF0325 protein YE3288 (129 aa).

It belongs to the UPF0325 family.

The polypeptide is UPF0325 protein YE3288 (Yersinia enterocolitica serotype O:8 / biotype 1B (strain NCTC 13174 / 8081)).